The sequence spans 164 residues: Lipoprotein signal peptidase (164 aa).

Helical transmembrane passes span 12 to 32 (WLWLVVVVLIIDLGSKYLILQ), 70 to 90 (WFFAGIAIGISVTLVVMMYRS), and 102 to 122 (ALIIGGALGNLFDRLWHGFVV). Residues aspartate 123 and aspartate 141 contribute to the active site. Residues 137–157 (FNLADTAICVGAALIVLEGFL) traverse the membrane as a helical segment.

Belongs to the peptidase A8 family.

Its subcellular location is the cell inner membrane. It catalyses the reaction Release of signal peptides from bacterial membrane prolipoproteins. Hydrolyzes -Xaa-Yaa-Zaa-|-(S,diacylglyceryl)Cys-, in which Xaa is hydrophobic (preferably Leu), and Yaa (Ala or Ser) and Zaa (Gly or Ala) have small, neutral side chains.. It functions in the pathway protein modification; lipoprotein biosynthesis (signal peptide cleavage). This protein specifically catalyzes the removal of signal peptides from prolipoproteins. In Escherichia coli O157:H7, this protein is Lipoprotein signal peptidase.